A 609-amino-acid polypeptide reads, in one-letter code: Arginine--tRNA ligase (609 aa).

The short motif at 132–142 (ANPTSSLHVGH) is the 'HIGH' region element.

Belongs to the class-I aminoacyl-tRNA synthetase family. As to quaternary structure, monomer.

The protein localises to the cytoplasm. The enzyme catalyses tRNA(Arg) + L-arginine + ATP = L-arginyl-tRNA(Arg) + AMP + diphosphate. The protein is Arginine--tRNA ligase of Psychrobacter sp. (strain PRwf-1).